A 394-amino-acid chain; its full sequence is Putative transporter AraJ (394 aa).

At 1 to 4 (MKKV) the chain is on the cytoplasmic side. The helical transmembrane segment at 5 to 27 (ILSLALGTFGLGMAEFGIMGVLT) threads the bilayer. Residues 28–41 (ELAHNVGISIPAAG) are Periplasmic-facing. The chain crosses the membrane as a helical span at residues 42–63 (HMISYYALGVVVGAPIIALFSS). Residues 64 to 69 (RYSLKH) lie on the Cytoplasmic side of the membrane. A helical membrane pass occupies residues 70-89 (ILLFLVALCVIGNAMFTLSS). At 90–93 (SYLM) the chain is on the periplasmic side. A helical membrane pass occupies residues 94–116 (LAIGRLVSGFPHGAFFGVGAIVL). Residues 117 to 128 (SKIIKPGKVTAA) are Cytoplasmic-facing. The helical transmembrane segment at 129–151 (VAGMVSGMTVANLLGIPLGTYLS) threads the bilayer. At 152–155 (QEFS) the chain is on the periplasmic side. Residues 156–178 (WRYTFLLIAVFNIAVMASVYFWV) traverse the membrane as a helical segment. Residues 179–198 (PDIRDEAKGNLREQFHFLRS) lie on the Cytoplasmic side of the membrane. A helical transmembrane segment spans residues 199–221 (PAPWLIFAATMFGNAGVFAWFSY). Topologically, residues 222-235 (VKPYMMFISGFSET) are periplasmic. The helical transmembrane segment at 236 to 255 (AMTFIMMLVGLGMVLGNMLS) threads the bilayer. Residues 256-261 (GRISGR) lie on the Cytoplasmic side of the membrane. Residues 262–284 (YSPLRIAAVTDFIIVLALLMLFF) traverse the membrane as a helical segment. Over 285 to 293 (CGGMKTTSL) the chain is Periplasmic. The chain crosses the membrane as a helical span at residues 294 to 316 (IFAFICCAGLFALSAPLQILLLQ). The Cytoplasmic portion of the chain corresponds to 317–322 (NAKGGE). Residues 323-342 (LLGAAGGQIAFNLGSAVGAY) form a helical membrane-spanning segment. Topologically, residues 343-351 (CGGMMLTLG) are periplasmic. The helical transmembrane segment at 352 to 374 (LAYNYVALPAALLSFAAMSSLLL) threads the bilayer. Residues 375-394 (YGRYKRQQAADTPVLAKPLG) lie on the Cytoplasmic side of the membrane.

It belongs to the major facilitator superfamily.

The protein resides in the cell inner membrane. Functionally, may be involved in either the transport or processing of arabinose polymers. The chain is Putative transporter AraJ (araJ) from Escherichia coli (strain K12).